Consider the following 85-residue polypeptide: UPF0386 protein RHECIAT_CH0001945 (85 aa).

This sequence belongs to the UPF0386 family.

This Rhizobium etli (strain CIAT 652) protein is UPF0386 protein RHECIAT_CH0001945.